The sequence spans 274 residues: 2-dehydro-3-deoxyphosphooctonate aldolase (274 aa).

The protein belongs to the KdsA family.

It is found in the cytoplasm. The catalysed reaction is D-arabinose 5-phosphate + phosphoenolpyruvate + H2O = 3-deoxy-alpha-D-manno-2-octulosonate-8-phosphate + phosphate. It functions in the pathway carbohydrate biosynthesis; 3-deoxy-D-manno-octulosonate biosynthesis; 3-deoxy-D-manno-octulosonate from D-ribulose 5-phosphate: step 2/3. Its pathway is bacterial outer membrane biogenesis; lipopolysaccharide biosynthesis. This Rickettsia conorii (strain ATCC VR-613 / Malish 7) protein is 2-dehydro-3-deoxyphosphooctonate aldolase.